The chain runs to 237 residues: MGLVGCVGKSSLVSMELRWARRRKSDNAASALPRSIPIYISTLKKDINLEELRNLYSLCNHSCNRLSEKDSNVEKIVDMKKLRRAISRSDVIVSVFCKPQHVDVDDAVLYSEEESLSSSLYTSEFGRQNKDDSFLGDLFQNAVPLTPSNGQLVGFGRAYSDYGLTASIHDLMVLPSLQRMGIGKLIVNRIVRLLTSRDIYDIAALCFEDERPFFKACGFGDDRMGSTTMMFTKSLEA.

The N-terminal 93 residues, 1–93 (MGLVGCVGKS…RAISRSDVIV (93 aa)), are a transit peptide targeting the chloroplast. An N-acetyltransferase domain is found at 94-237 (SVFCKPQHVD…TMMFTKSLEA (144 aa)). Acetyl-CoA-binding positions include 171–173 (LMV), 179–184 (RMGIGK), 207–209 (FED), and Phe214.

It belongs to the acetyltransferase family. GNAT subfamily. Oligomer. Autoacetylated. In terms of tissue distribution, expressed in green tissues.

Its subcellular location is the plastid. The protein resides in the chloroplast. The catalysed reaction is an N-terminal L-alpha-aminoacyl-[protein] + acetyl-CoA = N-terminal N(alpha)-acetyl-L-alpha-aminoacyl-[protein] + CoA + H(+). It carries out the reaction L-lysyl-[protein] + acetyl-CoA = N(6)-acetyl-L-lysyl-[protein] + CoA + H(+). Protein acetyltransferase with dual specificity triggering both N-alpha-acetylation (NTA) and epsilon-lysine acetylation (KA), possibly with a low efficiency or toward specific plastid substrates. This Arabidopsis thaliana (Mouse-ear cress) protein is GCN5-related N-acetyltransferase 3, chloroplastic.